The following is a 234-amino-acid chain: Cyclo(L-leucyl-L-leucyl) synthase (234 aa).

The active-site Nucleophile is the serine 33. Residues asparagine 36, 179–183 (YIFAE), tyrosine 203, and 208–209 (SI) each bind substrate.

The protein belongs to the CDPS family.

The enzyme catalyses 2 L-leucyl-tRNA(Leu) = cyclo(L-leucyl-L-leucyl) + 2 tRNA(Leu) + 2 H(+). Its function is as follows. It uses activated amino acids in the form of aminoacyl-tRNAs (aa-tRNAs) as substrates to catalyze the ATP-independent formation of cyclodipeptides which are intermediates in diketopiperazine (DKP) biosynthetic pathways. Catalyzes the formation of cyclo(L-Leu-L-Leu) (cLL) from L-leucyl-tRNA(Leu). Can incorporate various nonpolar residues, such as L-phenylalanine, L-leucine and L-methionine, into cyclodipeptides. This is Cyclo(L-leucyl-L-leucyl) synthase from Photorhabdus laumondii subsp. laumondii (strain DSM 15139 / CIP 105565 / TT01) (Photorhabdus luminescens subsp. laumondii).